Here is a 974-residue protein sequence, read N- to C-terminus: UvrABC system protein A (974 aa).

34-41 (GLSGSGKS) serves as a coordination point for ATP. 2 ABC transporter domains span residues 331-610 (WARS…TNSL) and 630-959 (ISKT…QFLK). 663–670 (GVSGGGKS) is a binding site for ATP. The C4-type zinc-finger motif lies at 762–788 (CEACQGDGVIKIEMHFLPDVYVTCDVC).

Belongs to the ABC transporter superfamily. UvrA family. In terms of assembly, forms a heterotetramer with UvrB during the search for lesions.

It localises to the cytoplasm. Functionally, the UvrABC repair system catalyzes the recognition and processing of DNA lesions. UvrA is an ATPase and a DNA-binding protein. A damage recognition complex composed of 2 UvrA and 2 UvrB subunits scans DNA for abnormalities. When the presence of a lesion has been verified by UvrB, the UvrA molecules dissociate. This Brucella melitensis biotype 1 (strain ATCC 23456 / CCUG 17765 / NCTC 10094 / 16M) protein is UvrABC system protein A.